Reading from the N-terminus, the 153-residue chain is Profilin (153 aa).

Belongs to the profilin family. In terms of assembly, occurs in many kinds of cells as a complex with monomeric actin in a 1:1 ratio.

The protein resides in the cytoplasm. It is found in the cytoskeleton. Functionally, binds to actin and affects the structure of the cytoskeleton. At high concentrations, profilin prevents the polymerization of actin, whereas it enhances it at low concentrations. By binding to PIP2, it inhibits the formation of IP3 and DG. The protein is Profilin of Tetrahymena pyriformis.